The following is a 180-amino-acid chain: Dual-action ribosomal maturation protein DarP (180 aa).

It belongs to the DarP family.

The protein localises to the cytoplasm. In terms of biological role, member of a network of 50S ribosomal subunit biogenesis factors which assembles along the 30S-50S interface, preventing incorrect 23S rRNA structures from forming. Promotes peptidyl transferase center (PTC) maturation. This Chromobacterium violaceum (strain ATCC 12472 / DSM 30191 / JCM 1249 / CCUG 213 / NBRC 12614 / NCIMB 9131 / NCTC 9757 / MK) protein is Dual-action ribosomal maturation protein DarP.